The following is a 598-amino-acid chain: Pentatricopeptide repeat-containing protein At1g09900 (598 aa).

14 PPR repeats span residues 101–135, 136–170, 171–201, 203–237, 238–272, 273–307, 308–342, 343–377, 378–412, 413–447, 448–482, 483–517, 518–552, and 553–587; these read EDVE…GNVP, DIIP…GAVP, DVIT…MSVS, DVVT…DCYP, DVIT…GCTP, DVVT…GCQP, NVIT…GFSP, SVVT…GCQP, NSLS…GCYP, DIVT…GCSP, VLIT…DLKP, DTIT…GIRP, NAVT…GCKP, and NETS…GLMK.

Belongs to the PPR family. P subfamily.

This chain is Pentatricopeptide repeat-containing protein At1g09900, found in Arabidopsis thaliana (Mouse-ear cress).